Here is a 324-residue protein sequence, read N- to C-terminus: MSKRIFARIAGTGGYLPEKVLTNNDLAHIVDTSDEWIRTRTGIRERHIAAEGETTSDLAYEAAIRALEAAEVRSADLDLIVVGTTTPDLIFPSTACLLQARLGAVGCGAFDVNAACSGFVYALSVAEKFVSSGCSKTVLVVGADTLTRIIDWSDRTTCVLFGDGAGAVVLKADEDTGILSTHLHADGSKKELLWDPVGVSVGFGEGKDCGALLMKGNEVFKYAVKALDRVVDETLEANHLDKHELDWLIPHQANLRIIEATARRLDMSMNQVVVTVDRHGNTSTASVPLALDEAIRSGRVQRGQLLLLEAFGGGFTWGSALLRY.

Residues Cys116 and His251 contribute to the active site. An ACP-binding region spans residues 252-256 (QANLR). Asn281 is an active-site residue.

It belongs to the thiolase-like superfamily. FabH family. As to quaternary structure, homodimer.

It localises to the cytoplasm. The enzyme catalyses malonyl-[ACP] + acetyl-CoA + H(+) = 3-oxobutanoyl-[ACP] + CO2 + CoA. It functions in the pathway lipid metabolism; fatty acid biosynthesis. Catalyzes the condensation reaction of fatty acid synthesis by the addition to an acyl acceptor of two carbons from malonyl-ACP. Catalyzes the first condensation reaction which initiates fatty acid synthesis and may therefore play a role in governing the total rate of fatty acid production. Possesses both acetoacetyl-ACP synthase and acetyl transacylase activities. Its substrate specificity determines the biosynthesis of branched-chain and/or straight-chain of fatty acids. This chain is Beta-ketoacyl-[acyl-carrier-protein] synthase III, found in Xylella fastidiosa (strain Temecula1 / ATCC 700964).